Here is a 621-residue protein sequence, read N- to C-terminus: Putative DNA 3'-5' helicase Rad25 (621 aa).

The Helicase ATP-binding domain occupies 268–417 (VERFTEQGSG…EIFTLIGPPI (150 aa)). 281-288 (GPPGSGKT) lines the ATP pocket. The short motif at 371–374 (DEVH) is the DEAH box element. The interval 441–465 (PWGDETEQSEYSSTSGHDRRQAAAS) is disordered. Positions 469–621 (KIDEIRYALA…EAVEPPAKTE (153 aa)) constitute a Helicase C-terminal domain.

It belongs to the helicase family. RAD25/XPB subfamily.

The enzyme catalyses Couples ATP hydrolysis with the unwinding of duplex DNA by translocating in the 3'-5' direction.. It carries out the reaction ATP + H2O = ADP + phosphate + H(+). The chain is Putative DNA 3'-5' helicase Rad25 from Haloarcula marismortui (strain ATCC 43049 / DSM 3752 / JCM 8966 / VKM B-1809) (Halobacterium marismortui).